Consider the following 86-residue polypeptide: uncharacterized protein (86 aa).

The signal sequence occupies residues 1 to 31 (MKQKLLLSGLAVSTVGITSYLLKDPSNRQKA). The interval 46-69 (PDMETFPVDKAGHPDPQDIEDNKM) is disordered. Residues 55 to 69 (KAGHPDPQDIEDNKM) are compositionally biased toward basic and acidic residues.

This is an uncharacterized protein from Bacillus subtilis (strain 168).